The sequence spans 349 residues: UDP-3-O-acylglucosamine N-acyltransferase (349 aa).

The active-site Proton acceptor is H246.

It belongs to the transferase hexapeptide repeat family. LpxD subfamily. In terms of assembly, homotrimer.

The catalysed reaction is a UDP-3-O-[(3R)-3-hydroxyacyl]-alpha-D-glucosamine + a (3R)-hydroxyacyl-[ACP] = a UDP-2-N,3-O-bis[(3R)-3-hydroxyacyl]-alpha-D-glucosamine + holo-[ACP] + H(+). It functions in the pathway bacterial outer membrane biogenesis; LPS lipid A biosynthesis. Its function is as follows. Catalyzes the N-acylation of UDP-3-O-acylglucosamine using 3-hydroxyacyl-ACP as the acyl donor. Is involved in the biosynthesis of lipid A, a phosphorylated glycolipid that anchors the lipopolysaccharide to the outer membrane of the cell. This chain is UDP-3-O-acylglucosamine N-acyltransferase, found in Trichormus variabilis (strain ATCC 29413 / PCC 7937) (Anabaena variabilis).